The following is a 239-amino-acid chain: Putative ABC transporter ATP-binding protein BR1368/BS1330_I1363 (239 aa).

The region spanning 5-234 (LSLDRVSVSR…EQVHLHYVEA (230 aa)) is the ABC transporter domain. 37–44 (GDNGVGKT) serves as a coordination point for ATP.

This sequence belongs to the ABC transporter superfamily.

The protein resides in the cell inner membrane. Functionally, probably part of an ABC transporter complex. Responsible for energy coupling to the transport system. The protein is Putative ABC transporter ATP-binding protein BR1368/BS1330_I1363 of Brucella suis biovar 1 (strain 1330).